We begin with the raw amino-acid sequence, 190 residues long: UPF0301 protein RSc0675 (190 aa).

The protein belongs to the UPF0301 (AlgH) family.

The sequence is that of UPF0301 protein RSc0675 from Ralstonia nicotianae (strain ATCC BAA-1114 / GMI1000) (Ralstonia solanacearum).